A 466-amino-acid polypeptide reads, in one-letter code: SVGFKAGVKDYKLTYYTPEYETKDTDILAAFRVTPQPGVPPEEAGAAVAAESSTGTWTTVWTDGLTSLDRYKGRCYHIEPVPGEESQFIAYVAYPLDLFEEGSVTNMFTSIVGNVFGFNAVRALRLEDLRIPPAYTKTFQGPPHGIQVERDKLNKYGRPLLGCTIKPKLGLSAKNYGRAVYECLRGGLDFTKDDENVNSQPFMRWRDRFLFCAEAIFKSQSETGEIKGHYLNATAGTCEEMIKRAVFARELGVPIVMHDYLTGGFTANTSLAHYCRDNGLLLHIHRAMHAVIDRQKNHGXHFRVLAKALRMSGGDHIHSGTVVGKLEGEREITLGFVDLLRDDFVEKDRSRGIFFTQDWVSLPGVLPVASGGIHVWHMPALTEIFGDDSVLQFGGGTLGXPWGNXPGAVANRVALEACVQARNEGRDLAREGNEIIREASKWSPELAAACEVWKEIKFEFEPVDTI.

N6,N6,N6-trimethyllysine is present on Lys-5. Substrate contacts are provided by Asn-114 and Thr-164. Catalysis depends on Lys-166, which acts as the Proton acceptor. Substrate is bound at residue Lys-168. The Mg(2+) site is built by Lys-192, Asp-194, and Glu-195. An N6-carboxylysine modification is found at Lys-192. His-285 serves as the catalytic Proton acceptor. Positions 286, 318, and 370 each coordinate substrate.

It belongs to the RuBisCO large chain family. Type I subfamily. As to quaternary structure, heterohexadecamer of 8 large chains and 8 small chains; disulfide-linked. The disulfide link is formed within the large subunit homodimers. It depends on Mg(2+) as a cofactor. The disulfide bond which can form in the large chain dimeric partners within the hexadecamer appears to be associated with oxidative stress and protein turnover.

It localises to the plastid. Its subcellular location is the chloroplast. It catalyses the reaction 2 (2R)-3-phosphoglycerate + 2 H(+) = D-ribulose 1,5-bisphosphate + CO2 + H2O. The enzyme catalyses D-ribulose 1,5-bisphosphate + O2 = 2-phosphoglycolate + (2R)-3-phosphoglycerate + 2 H(+). Functionally, ruBisCO catalyzes two reactions: the carboxylation of D-ribulose 1,5-bisphosphate, the primary event in carbon dioxide fixation, as well as the oxidative fragmentation of the pentose substrate in the photorespiration process. Both reactions occur simultaneously and in competition at the same active site. The polypeptide is Ribulose bisphosphate carboxylase large chain (Oxalis dillenii (Gray-green wood sorrel)).